The sequence spans 59 residues: MSLVKVRIGDSIDKALRALKKRLDKEGVMKSVKAHRFYSKPSIKKRAKSKAALKYKKQR.

Residues 40-59 (KPSIKKRAKSKAALKYKKQR) are disordered.

Belongs to the bacterial ribosomal protein bS21 family.

The protein is Small ribosomal subunit protein bS21 of Protochlamydia amoebophila (strain UWE25).